A 291-amino-acid polypeptide reads, in one-letter code: Ribose-phosphate pyrophosphokinase (291 aa).

Residues 34-36 (DGE) and 93-94 (RQ) contribute to the ATP site. Mg(2+)-binding residues include His127 and Asp165. Residue Lys188 is part of the active site. Residues Arg190, Asp216, and 220–224 (STGGT) contribute to the D-ribose 5-phosphate site.

The protein belongs to the ribose-phosphate pyrophosphokinase family. Class III (archaeal) subfamily. Requires Mg(2+) as cofactor.

It localises to the cytoplasm. It catalyses the reaction D-ribose 5-phosphate + ATP = 5-phospho-alpha-D-ribose 1-diphosphate + AMP + H(+). Its pathway is metabolic intermediate biosynthesis; 5-phospho-alpha-D-ribose 1-diphosphate biosynthesis; 5-phospho-alpha-D-ribose 1-diphosphate from D-ribose 5-phosphate (route I): step 1/1. Its function is as follows. Involved in the biosynthesis of the central metabolite phospho-alpha-D-ribosyl-1-pyrophosphate (PRPP) via the transfer of pyrophosphoryl group from ATP to 1-hydroxyl of ribose-5-phosphate (Rib-5-P). The polypeptide is Ribose-phosphate pyrophosphokinase (Sulfurisphaera tokodaii (strain DSM 16993 / JCM 10545 / NBRC 100140 / 7) (Sulfolobus tokodaii)).